Consider the following 59-residue polypeptide: Large ribosomal subunit protein bL32 (59 aa).

Belongs to the bacterial ribosomal protein bL32 family.

The protein is Large ribosomal subunit protein bL32 of Mycoplasma capricolum subsp. capricolum (strain California kid / ATCC 27343 / NCTC 10154).